Reading from the N-terminus, the 302-residue chain is 4-hydroxy-tetrahydrodipicolinate synthase (302 aa).

T56 is a binding site for pyruvate. Y145 acts as the Proton donor/acceptor in catalysis. Catalysis depends on K173, which acts as the Schiff-base intermediate with substrate. V215 contributes to the pyruvate binding site.

Belongs to the DapA family. As to quaternary structure, homotetramer; dimer of dimers.

The protein resides in the cytoplasm. The enzyme catalyses L-aspartate 4-semialdehyde + pyruvate = (2S,4S)-4-hydroxy-2,3,4,5-tetrahydrodipicolinate + H2O + H(+). It participates in amino-acid biosynthesis; L-lysine biosynthesis via DAP pathway; (S)-tetrahydrodipicolinate from L-aspartate: step 3/4. Functionally, catalyzes the condensation of (S)-aspartate-beta-semialdehyde [(S)-ASA] and pyruvate to 4-hydroxy-tetrahydrodipicolinate (HTPA). The protein is 4-hydroxy-tetrahydrodipicolinate synthase of Prochlorococcus marinus (strain MIT 9515).